We begin with the raw amino-acid sequence, 410 residues long: Zinc finger TRAF-type-containing protein 1 (410 aa).

Over residues 1–13 (MSGAEEAGGGGPA) the composition is skewed to gly residues. Residues 1-22 (MSGAEEAGGGGPAAGPAGSVPA) are disordered. The RING-type; degenerate zinc finger occupies 117–162 (CTVCLDLPKASVYQCTNGHLMCAGCFIHLLADARLKEEQATCPNCR). A TRAF-type zinc finger spans residues 158–231 (CPNCRCEISK…PWHGPFHELT (74 aa)).

This sequence belongs to the ZFTRAF1 family. As to quaternary structure, interacts with LGALS3.

Its subcellular location is the cytoplasm. It localises to the perinuclear region. This chain is Zinc finger TRAF-type-containing protein 1, found in Bos taurus (Bovine).